The chain runs to 667 residues: Bicarbonate transport ATP-binding protein CmpC (667 aa).

The ABC transporter domain maps to 5-239 (VAVDNIDKVF…RPRKRMEVVE (235 aa)). ATP is bound at residue 42–49 (GHSGCGKS). The cmpA-like stretch occupies residues 281-667 (LELGYVPLVA…DNPTPAPVFA (387 aa)).

It belongs to the ABC transporter superfamily. Nitrate/nitrite/cyanate uptake transporter (NitT) (TC 3.A.1.16) family. In terms of assembly, the complex is composed of two ATP-binding proteins (CmpC and CmpD), a transmembrane protein (CmpB) and a solute-binding protein (CmpA).

It localises to the cell inner membrane. Part of the ABC transporter complex CmpABCD involved in bicarbonate transport. Responsible for energy coupling to the transport system. In Synechocystis sp. (strain ATCC 27184 / PCC 6803 / Kazusa), this protein is Bicarbonate transport ATP-binding protein CmpC (cmpC).